The following is a 539-amino-acid chain: Serine/threonine-protein kinase 35 (539 aa).

Positions 103-161 are disordered; sequence ITIQGPAPPHLGARRRDEARGARAAPLLLPPPPAAMETGKENGARRGTKSPERKRRSPV. The span at 148–160 shows a compositional bias: basic residues; it reads RGTKSPERKRRSP. Residues 207–535 enclose the Protein kinase domain; it reads YSLLAEIGRG…FELETRMDQV (329 aa). Residues 213 to 221 and lysine 236 contribute to the ATP site; that span reads IGRGSYGVV. Aspartate 365 (proton acceptor) is an active-site residue.

This sequence belongs to the protein kinase superfamily. Ser/Thr protein kinase family. In terms of assembly, interacts with PDLIM1/CLP-36. In terms of processing, autophosphorylated.

Its subcellular location is the nucleus. The protein localises to the nucleolus. It is found in the cytoplasm. It catalyses the reaction L-seryl-[protein] + ATP = O-phospho-L-seryl-[protein] + ADP + H(+). The enzyme catalyses L-threonyl-[protein] + ATP = O-phospho-L-threonyl-[protein] + ADP + H(+). The polypeptide is Serine/threonine-protein kinase 35 (Stk35) (Mus musculus (Mouse)).